The chain runs to 406 residues: Coenzyme A biosynthesis bifunctional protein CoaBC (406 aa).

Residues Ser-2–Asn-190 form a phosphopantothenoylcysteine decarboxylase region. Residue Cys-158 is the Proton donor of the active site. The interval Ile-191 to Arg-406 is phosphopantothenate--cysteine ligase. Residues Gly-273–Ala-275, Asp-279, Lys-289, Pro-308–Val-311, Phe-327, Lys-341, and Lys-345 each bind CTP.

In the N-terminal section; belongs to the HFCD (homo-oligomeric flavin containing Cys decarboxylase) superfamily. The protein in the C-terminal section; belongs to the PPC synthetase family. The cofactor is Mg(2+). FMN is required as a cofactor.

It carries out the reaction N-[(R)-4-phosphopantothenoyl]-L-cysteine + H(+) = (R)-4'-phosphopantetheine + CO2. The enzyme catalyses (R)-4'-phosphopantothenate + L-cysteine + CTP = N-[(R)-4-phosphopantothenoyl]-L-cysteine + CMP + diphosphate + H(+). The protein operates within cofactor biosynthesis; coenzyme A biosynthesis; CoA from (R)-pantothenate: step 2/5. Its pathway is cofactor biosynthesis; coenzyme A biosynthesis; CoA from (R)-pantothenate: step 3/5. Functionally, catalyzes two sequential steps in the biosynthesis of coenzyme A. In the first step cysteine is conjugated to 4'-phosphopantothenate to form 4-phosphopantothenoylcysteine. In the second step the latter compound is decarboxylated to form 4'-phosphopantotheine. The protein is Coenzyme A biosynthesis bifunctional protein CoaBC of Escherichia coli O6:H1 (strain CFT073 / ATCC 700928 / UPEC).